Reading from the N-terminus, the 441-residue chain is Squalene synthase (441 aa).

2 helical membrane passes run Ser293 to Gly313 and Phe420 to Ala440.

This sequence belongs to the phytoene/squalene synthase family. Mg(2+) is required as a cofactor.

It localises to the endoplasmic reticulum membrane. It carries out the reaction 2 (2E,6E)-farnesyl diphosphate + NADPH + H(+) = squalene + 2 diphosphate + NADP(+). The catalysed reaction is 2 (2E,6E)-farnesyl diphosphate + NADH + H(+) = squalene + 2 diphosphate + NAD(+). It participates in terpene metabolism; lanosterol biosynthesis; lanosterol from farnesyl diphosphate: step 1/3. Its function is as follows. Catalyzes the condensation of 2 two farnesyl pyrophosphate moieties to form squalene. It is the first committed enzyme of the sterol biosynthesis pathway. Required for the biosynthesis of ergosterol. In Eremothecium gossypii (strain ATCC 10895 / CBS 109.51 / FGSC 9923 / NRRL Y-1056) (Yeast), this protein is Squalene synthase (ERG9).